Reading from the N-terminus, the 312-residue chain is tRNA uridine(34) hydroxylase (312 aa).

A Rhodanese domain is found at 123-217 (SDPEVLLIDT…YLEEVPQEQS (95 aa)). Catalysis depends on C177, which acts as the Cysteine persulfide intermediate. Residues 282–293 (ARERQKQIELAR) show a composition bias toward basic and acidic residues. Residues 282 to 312 (ARERQKQIELARQRNQPHPLGRDPRQSTLEN) form a disordered region.

It belongs to the TrhO family.

It carries out the reaction uridine(34) in tRNA + AH2 + O2 = 5-hydroxyuridine(34) in tRNA + A + H2O. In terms of biological role, catalyzes oxygen-dependent 5-hydroxyuridine (ho5U) modification at position 34 in tRNAs. In Pseudomonas aeruginosa (strain UCBPP-PA14), this protein is tRNA uridine(34) hydroxylase.